The chain runs to 142 residues: Ribosome-binding factor A (142 aa).

Positions 118–142 are disordered; sequence DKNGDAEVDDTQVDDEPSVDSEKGE. Residues 123–136 show a composition bias toward acidic residues; the sequence is AEVDDTQVDDEPSV.

Belongs to the RbfA family. In terms of assembly, monomer. Binds 30S ribosomal subunits, but not 50S ribosomal subunits or 70S ribosomes.

It localises to the cytoplasm. Its function is as follows. One of several proteins that assist in the late maturation steps of the functional core of the 30S ribosomal subunit. Associates with free 30S ribosomal subunits (but not with 30S subunits that are part of 70S ribosomes or polysomes). Required for efficient processing of 16S rRNA. May interact with the 5'-terminal helix region of 16S rRNA. The polypeptide is Ribosome-binding factor A (Colwellia psychrerythraea (strain 34H / ATCC BAA-681) (Vibrio psychroerythus)).